A 462-amino-acid polypeptide reads, in one-letter code: Proline--tRNA ligase (462 aa).

The protein belongs to the class-II aminoacyl-tRNA synthetase family. ProS type 3 subfamily. In terms of assembly, homodimer.

The protein resides in the cytoplasm. The catalysed reaction is tRNA(Pro) + L-proline + ATP = L-prolyl-tRNA(Pro) + AMP + diphosphate. Its function is as follows. Catalyzes the attachment of proline to tRNA(Pro) in a two-step reaction: proline is first activated by ATP to form Pro-AMP and then transferred to the acceptor end of tRNA(Pro). The sequence is that of Proline--tRNA ligase from Thermoplasma acidophilum (strain ATCC 25905 / DSM 1728 / JCM 9062 / NBRC 15155 / AMRC-C165).